The primary structure comprises 111 residues: Notch-regulated ankyrin repeat-containing protein B (111 aa).

ANK repeat units lie at residues 47-76 (EGQT…DTRL) and 80-109 (DGWS…YSSS).

This sequence belongs to the NRARP family.

Functionally, regulates independently canonical Wnt and Notch signaling by modulating LEF1 and Notch protein turnover. Stabilizes LEF1, a pivotal transcription factor in the Wnt signaling cascade, by blocking its ubiquitination. Involved in angiogenesis; involved in intersegmental vessel patterning during development. The chain is Notch-regulated ankyrin repeat-containing protein B (nrarpb) from Danio rerio (Zebrafish).